Consider the following 314-residue polypeptide: Transcription factor DICHOTOMA (314 aa).

Positions 87–145 (KKDRHSKINRPQGPRDRRVRLSIGIARKFFDLQEMLGFDKPSKTLDWLLTKSKEAIKEL) constitute a TCP domain. In terms of domain architecture, R spans 201–218 (KESRAKARARARERTKEK).

It is found in the nucleus. Transcription regulator involved in the dorsovental asymmetry of flowers. Promotes dorsal identity. This chain is Transcription factor DICHOTOMA (DICH), found in Antirrhinum majus (Garden snapdragon).